Consider the following 445-residue polypeptide: Phosphoglucosamine mutase (445 aa).

S102 serves as the catalytic Phosphoserine intermediate. The Mg(2+) site is built by S102, D241, D243, and D245. S102 carries the post-translational modification Phosphoserine.

It belongs to the phosphohexose mutase family. The cofactor is Mg(2+). Post-translationally, activated by phosphorylation.

The enzyme catalyses alpha-D-glucosamine 1-phosphate = D-glucosamine 6-phosphate. In terms of biological role, catalyzes the conversion of glucosamine-6-phosphate to glucosamine-1-phosphate. This chain is Phosphoglucosamine mutase, found in Haemophilus influenzae (strain 86-028NP).